The following is a 21-amino-acid chain: Major outer membrane protein P44 (21 aa).

As to quaternary structure, monomer.

It is found in the cell outer membrane. This is Major outer membrane protein P44 from Mannheimia haemolytica (Pasteurella haemolytica).